The sequence spans 1070 residues: DNA-directed RNA polymerase subunit beta (1070 aa).

This sequence belongs to the RNA polymerase beta chain family. In plastids the minimal PEP RNA polymerase catalytic core is composed of four subunits: alpha, beta, beta', and beta''. When a (nuclear-encoded) sigma factor is associated with the core the holoenzyme is formed, which can initiate transcription.

It is found in the plastid. Its subcellular location is the chloroplast. The catalysed reaction is RNA(n) + a ribonucleoside 5'-triphosphate = RNA(n+1) + diphosphate. In terms of biological role, DNA-dependent RNA polymerase catalyzes the transcription of DNA into RNA using the four ribonucleoside triphosphates as substrates. The sequence is that of DNA-directed RNA polymerase subunit beta from Populus trichocarpa (Western balsam poplar).